A 243-amino-acid polypeptide reads, in one-letter code: Alanyl-tRNA editing protein AlaX-M (243 aa).

Residues H105, H109, C208, and H212 each coordinate Zn(2+).

The protein belongs to the class-II aminoacyl-tRNA synthetase family. Editing domain AlaX-M subfamily. It depends on Zn(2+) as a cofactor.

It localises to the cytoplasm. Its function is as follows. Functions in trans to edit the amino acid moiety from incorrectly charged Ser-tRNA(Ala) or Gly-tRNA(Ala). Has no activity on incorrectly charged Ser-tRNA(Thr), nor on correctly charged Ala-tRNA(Ala) or Ser-tRNA(Ser). The sequence is that of Alanyl-tRNA editing protein AlaX-M (alaXM) from Methanosarcina barkeri (strain Fusaro / DSM 804).